The sequence spans 607 residues: DNA mismatch repair protein MutL (607 aa).

Residues 374–411 (RTEAGNEHVPSANRIQPPDPSIDMPDEPVPEQTDEPVA) are disordered. Acidic residues predominate over residues 397 to 407 (MPDEPVPEQTD).

This sequence belongs to the DNA mismatch repair MutL/HexB family.

This protein is involved in the repair of mismatches in DNA. It is required for dam-dependent methyl-directed DNA mismatch repair. May act as a 'molecular matchmaker', a protein that promotes the formation of a stable complex between two or more DNA-binding proteins in an ATP-dependent manner without itself being part of a final effector complex. The polypeptide is DNA mismatch repair protein MutL (Exiguobacterium sibiricum (strain DSM 17290 / CCUG 55495 / CIP 109462 / JCM 13490 / 255-15)).